The sequence spans 372 residues: N-acetylneuraminate-9-phosphate synthase (372 aa).

One can recognise an AFP-like domain in the interval 314 to 372; that stretch reads SIVAARNLNKGYRLQLADMAIKVSEPSGLTAEDFLDLVGKELADNIGEDEPILGNSIIN.

It catalyses the reaction aldehydo-N-acetyl-D-mannosamine 6-phosphate + phosphoenolpyruvate + H2O = N-acetylneuraminate 9-phosphate + phosphate. The catalysed reaction is aldehydo-D-mannose 6-phosphate + phosphoenolpyruvate + H2O = 3-deoxy-D-glycero-beta-D-galacto-non-2-ulopyranosonate 9-phosphate + phosphate. Functionally, catalyzes the condensation of phosphoenolpyruvate (PEP) and N-acetylmannosamine 6-phosphate (ManNAc-6-P) or D-mannose 6-phosphate (Man-6-P) to generate the phosphorylated forms of both the sialic acids N-acetylneuraminic acid (Neu5Ac) and deaminoneuraminic acid (KDN), respectively. Essential for biosynthesis of sialic acids in neurons of the central nervous system. The protein is N-acetylneuraminate-9-phosphate synthase of Drosophila melanogaster (Fruit fly).